Here is a 361-residue protein sequence, read N- to C-terminus: Cilia- and flagella-associated protein 263 (361 aa).

The protein belongs to the CFAP263 family. In terms of assembly, forms a complex with CFAP184; the interaction is required for functional activity in cilia.

It is found in the cell projection. The protein localises to the cilium. Functionally, in complex with CFAP263, acts as a regulator of ciliary beating that connects radial spoke 3 (RS3) to the inner dynein arm (IDA) and the nexin-dynein regulatory complex (N-DRC). The complex is positioned parallel to N-DRC and forms a connection between the arch at the base of RS3, the IDA tail and N-DRC. This is Cilia- and flagella-associated protein 263 (CFAP263) from Tetrahymena thermophila (strain SB210).